The following is a 194-amino-acid chain: ATP-dependent Clp protease proteolytic subunit (194 aa).

The Nucleophile role is filled by serine 98. Histidine 123 is an active-site residue.

Belongs to the peptidase S14 family. As to quaternary structure, fourteen ClpP subunits assemble into 2 heptameric rings which stack back to back to give a disk-like structure with a central cavity, resembling the structure of eukaryotic proteasomes.

Its subcellular location is the cytoplasm. The catalysed reaction is Hydrolysis of proteins to small peptides in the presence of ATP and magnesium. alpha-casein is the usual test substrate. In the absence of ATP, only oligopeptides shorter than five residues are hydrolyzed (such as succinyl-Leu-Tyr-|-NHMec, and Leu-Tyr-Leu-|-Tyr-Trp, in which cleavage of the -Tyr-|-Leu- and -Tyr-|-Trp bonds also occurs).. Its function is as follows. Cleaves peptides in various proteins in a process that requires ATP hydrolysis. Has a chymotrypsin-like activity. Plays a major role in the degradation of misfolded proteins. This Actinobacillus succinogenes (strain ATCC 55618 / DSM 22257 / CCUG 43843 / 130Z) protein is ATP-dependent Clp protease proteolytic subunit.